The sequence spans 192 residues: GTP cyclohydrolase-2 (192 aa).

Arg50 to Glu54 provides a ligand contact to GTP. Zn(2+) is bound by residues Cys55, Cys66, and Cys68. Residues Glu92–Arg94 and Thr114 each bind GTP. Asp126 serves as the catalytic Proton acceptor. Arg128 acts as the Nucleophile in catalysis. Thr149 and Lys154 together coordinate GTP.

Belongs to the GTP cyclohydrolase II family. Zn(2+) serves as cofactor.

It catalyses the reaction GTP + 4 H2O = 2,5-diamino-6-hydroxy-4-(5-phosphoribosylamino)-pyrimidine + formate + 2 phosphate + 3 H(+). It functions in the pathway cofactor biosynthesis; riboflavin biosynthesis; 5-amino-6-(D-ribitylamino)uracil from GTP: step 1/4. In terms of biological role, catalyzes the conversion of GTP to 2,5-diamino-6-ribosylamino-4(3H)-pyrimidinone 5'-phosphate (DARP), formate and pyrophosphate. The chain is GTP cyclohydrolase-2 from Helicobacter acinonychis (strain Sheeba).